Here is a 269-residue protein sequence, read N- to C-terminus: tRNA-cytidine(32) 2-sulfurtransferase (269 aa).

Residues 53 to 58 (SGGKDS) carry the PP-loop motif motif. The [4Fe-4S] cluster site is built by cysteine 128, cysteine 131, and cysteine 218.

This sequence belongs to the TtcA family. In terms of assembly, homodimer. Requires Mg(2+) as cofactor. The cofactor is [4Fe-4S] cluster.

The protein localises to the cytoplasm. The enzyme catalyses cytidine(32) in tRNA + S-sulfanyl-L-cysteinyl-[cysteine desulfurase] + AH2 + ATP = 2-thiocytidine(32) in tRNA + L-cysteinyl-[cysteine desulfurase] + A + AMP + diphosphate + H(+). It functions in the pathway tRNA modification. Its function is as follows. Catalyzes the ATP-dependent 2-thiolation of cytidine in position 32 of tRNA, to form 2-thiocytidine (s(2)C32). The sulfur atoms are provided by the cysteine/cysteine desulfurase (IscS) system. The polypeptide is tRNA-cytidine(32) 2-sulfurtransferase (Pelobacter propionicus (strain DSM 2379 / NBRC 103807 / OttBd1)).